A 250-amino-acid polypeptide reads, in one-letter code: Proteasome subunit alpha type-7 (250 aa).

Belongs to the peptidase T1A family. In terms of assembly, the 26S proteasome consists of a 20S proteasome core and two 19S regulatory subunits. The 20S proteasome core is composed of 28 subunits that are arranged in four stacked rings, resulting in a barrel-shaped structure. The two end rings are each formed by seven alpha subunits, and the two central rings are each formed by seven beta subunits. The catalytic chamber with the active sites is on the inside of the barrel.

It localises to the cytoplasm. Its subcellular location is the nucleus. The proteasome is a multicatalytic proteinase complex which is characterized by its ability to cleave peptides with Arg, Phe, Tyr, Leu, and Glu adjacent to the leaving group at neutral or slightly basic pH. The proteasome has an ATP-dependent proteolytic activity. The chain is Proteasome subunit alpha type-7 (psmA7) from Dictyostelium discoideum (Social amoeba).